Reading from the N-terminus, the 294-residue chain is Ribosomal protein L11 methyltransferase (294 aa).

4 residues coordinate S-adenosyl-L-methionine: Thr-146, Gly-167, Asp-189, and Asn-231.

The protein belongs to the methyltransferase superfamily. PrmA family.

It is found in the cytoplasm. The enzyme catalyses L-lysyl-[protein] + 3 S-adenosyl-L-methionine = N(6),N(6),N(6)-trimethyl-L-lysyl-[protein] + 3 S-adenosyl-L-homocysteine + 3 H(+). Functionally, methylates ribosomal protein L11. The sequence is that of Ribosomal protein L11 methyltransferase from Aliivibrio salmonicida (strain LFI1238) (Vibrio salmonicida (strain LFI1238)).